The following is a 152-amino-acid chain: Transcriptional regulator MraZ (152 aa).

2 SpoVT-AbrB domains span residues 5–52 (ASAI…PADE) and 81–124 (AHEI…DEAQ).

Belongs to the MraZ family. Forms oligomers.

It is found in the cytoplasm. The protein resides in the nucleoid. The polypeptide is Transcriptional regulator MraZ (Shewanella amazonensis (strain ATCC BAA-1098 / SB2B)).